The chain runs to 399 residues: Multi-drug resistance efflux pump PmrA (399 aa).

A run of 10 helical transmembrane segments spans residues 12 to 34 (IAWF…MPIF), 49 to 71 (AGLA…GILA), 84 to 106 (GLAM…LIFL), 140 to 162 (LSTG…AELF), 167 to 186 (VFLL…ICFI), 217 to 239 (LFLT…ALYV), 248 to 270 (LLFV…AGVM), 306 to 328 (LGLY…NALL), 340 to 362 (VFAF…GSAV), and 366 to 388 (FGYH…FNLI).

It belongs to the major facilitator superfamily. TCR/Tet family.

It localises to the cell membrane. Efflux pump for various substrates. This chain is Multi-drug resistance efflux pump PmrA (pmrA), found in Streptococcus pneumoniae serotype 4 (strain ATCC BAA-334 / TIGR4).